The following is a 250-amino-acid chain: Phosphoribosylaminoimidazole-succinocarboxamide synthase (250 aa).

It belongs to the SAICAR synthetase family.

The catalysed reaction is 5-amino-1-(5-phospho-D-ribosyl)imidazole-4-carboxylate + L-aspartate + ATP = (2S)-2-[5-amino-1-(5-phospho-beta-D-ribosyl)imidazole-4-carboxamido]succinate + ADP + phosphate + 2 H(+). It participates in purine metabolism; IMP biosynthesis via de novo pathway; 5-amino-1-(5-phospho-D-ribosyl)imidazole-4-carboxamide from 5-amino-1-(5-phospho-D-ribosyl)imidazole-4-carboxylate: step 1/2. The chain is Phosphoribosylaminoimidazole-succinocarboxamide synthase from Picosynechococcus sp. (strain ATCC 27264 / PCC 7002 / PR-6) (Agmenellum quadruplicatum).